A 156-amino-acid chain; its full sequence is SsrA-binding protein (156 aa).

This sequence belongs to the SmpB family.

The protein localises to the cytoplasm. Its function is as follows. Required for rescue of stalled ribosomes mediated by trans-translation. Binds to transfer-messenger RNA (tmRNA), required for stable association of tmRNA with ribosomes. tmRNA and SmpB together mimic tRNA shape, replacing the anticodon stem-loop with SmpB. tmRNA is encoded by the ssrA gene; the 2 termini fold to resemble tRNA(Ala) and it encodes a 'tag peptide', a short internal open reading frame. During trans-translation Ala-aminoacylated tmRNA acts like a tRNA, entering the A-site of stalled ribosomes, displacing the stalled mRNA. The ribosome then switches to translate the ORF on the tmRNA; the nascent peptide is terminated with the 'tag peptide' encoded by the tmRNA and targeted for degradation. The ribosome is freed to recommence translation, which seems to be the essential function of trans-translation. The sequence is that of SsrA-binding protein from Thermoanaerobacter pseudethanolicus (strain ATCC 33223 / 39E) (Clostridium thermohydrosulfuricum).